The chain runs to 329 residues: MTDLTATPAPAEPAASAYDPTAKQKAQAKTARIPIKIVPIEKLKKPEWIRVKAATGSSRFNEIKTILREHNLHTVCEEASCPNIGECFGKGTATFMIMGDKCTRRCPFCDVGHGRPDPLDADEPKNLARTIAALKLKYVVITSVDRDDLRDGGAGHFVECIREVREQSPATRIEILTPDFRGRLDRALAILNAAPPDVMNHNLETVPRLYKEARPGSDYAHSLKLLKDFKALHPDVATKSGLMVGLGETTDEILQVMRDLRAHDVDMLTIGQYLQPSEHHLPVREYVHPDTFKMYEEEAYKMGFTHAAVGAMVRSSYHADLQAHGAGVV.

A disordered region spans residues 1–23 (MTDLTATPAPAEPAASAYDPTAK). [4Fe-4S] cluster-binding residues include Cys76, Cys81, Cys87, Cys102, Cys106, Cys109, and Ser316. A Radical SAM core domain is found at 87-305 (CFGKGTATFM…EEEAYKMGFT (219 aa)).

This sequence belongs to the radical SAM superfamily. Lipoyl synthase family. It depends on [4Fe-4S] cluster as a cofactor.

Its subcellular location is the cytoplasm. It carries out the reaction [[Fe-S] cluster scaffold protein carrying a second [4Fe-4S](2+) cluster] + N(6)-octanoyl-L-lysyl-[protein] + 2 oxidized [2Fe-2S]-[ferredoxin] + 2 S-adenosyl-L-methionine + 4 H(+) = [[Fe-S] cluster scaffold protein] + N(6)-[(R)-dihydrolipoyl]-L-lysyl-[protein] + 4 Fe(3+) + 2 hydrogen sulfide + 2 5'-deoxyadenosine + 2 L-methionine + 2 reduced [2Fe-2S]-[ferredoxin]. It participates in protein modification; protein lipoylation via endogenous pathway; protein N(6)-(lipoyl)lysine from octanoyl-[acyl-carrier-protein]: step 2/2. Catalyzes the radical-mediated insertion of two sulfur atoms into the C-6 and C-8 positions of the octanoyl moiety bound to the lipoyl domains of lipoate-dependent enzymes, thereby converting the octanoylated domains into lipoylated derivatives. The polypeptide is Lipoyl synthase (Burkholderia pseudomallei (strain 1106a)).